Here is a 261-residue protein sequence, read N- to C-terminus: tRNA 5-carboxymethoxyuridine methyltransferase (261 aa).

S-adenosyl-L-methionine contacts are provided by residues arginine 26, 52–53, aspartate 73, 102–103, and histidine 119; these read GG and AQ.

It belongs to the class I-like SAM-binding methyltransferase superfamily. CmoM family.

It catalyses the reaction 5-carboxymethoxyuridine(34) in tRNA + S-adenosyl-L-methionine = 5-methoxycarbonylmethoxyuridine(34) in tRNA + S-adenosyl-L-homocysteine. In terms of biological role, catalyzes the methylation of 5-carboxymethoxyuridine (cmo5U) to form 5-methoxycarbonylmethoxyuridine (mcmo5U) at position 34 in tRNAs. Four tRNAs (tRNA(Ala1), tRNA(Ser1), tRNA(Pro3) and tRNA(Thr4)) are fully modified with mcmo5U in stationary-phase E.coli. Also present at low frequency in tRNA(Leu3) and tRNA(Val1). In Escherichia coli (strain K12), this protein is tRNA 5-carboxymethoxyuridine methyltransferase.